Here is a 232-residue protein sequence, read N- to C-terminus: 2,3,4,5-tetrahydropyridine-2,6-dicarboxylate N-acetyltransferase (232 aa).

This sequence belongs to the transferase hexapeptide repeat family. DapH subfamily.

The catalysed reaction is (S)-2,3,4,5-tetrahydrodipicolinate + acetyl-CoA + H2O = L-2-acetamido-6-oxoheptanedioate + CoA. It participates in amino-acid biosynthesis; L-lysine biosynthesis via DAP pathway; LL-2,6-diaminopimelate from (S)-tetrahydrodipicolinate (acetylase route): step 1/3. Functionally, catalyzes the transfer of an acetyl group from acetyl-CoA to tetrahydrodipicolinate. The protein is 2,3,4,5-tetrahydropyridine-2,6-dicarboxylate N-acetyltransferase of Streptococcus mutans serotype c (strain ATCC 700610 / UA159).